The following is a 323-amino-acid chain: Protein REDOX 2 (323 aa).

D53 lines the NADP(+) pocket. Residue Y58 is the Proton donor of the active site. A substrate-binding site is contributed by H121. Residues 167–168 (SN), Q189, 215–220 (WSPLLS), and 289–297 (DQIHEIPQR) each bind NADP(+). A disordered region spans residues 302-323 (GEEFMHPEGPIKSPEELWDGDL).

This sequence belongs to the aldo/keto reductase family. As to quaternary structure, monomer. Expressed in leaf epidermis.

The catalysed reaction is 15alpha-stemmadenine + NADP(+) = 17-dehydrostemmadenine + NADPH + 2 H(+). Its pathway is alkaloid biosynthesis. In terms of biological role, component of iboga and aspidosperma monoterpenoid indole alkaloids (MIAs, e.g. tabersonine and catharanthine) biosynthesis pathway from 19E-geissoschizine. Catalyzes the second oxidation step of the unstable intermediate product resulting from the reaction triggered by the geissoschizine oxidase (GO) in the stemmadenine biosynthesis process from 19E-geissoschizine. This Catharanthus roseus (Madagascar periwinkle) protein is Protein REDOX 2.